Here is a 109-residue protein sequence, read N- to C-terminus: Ribonuclease P protein component (109 aa).

It belongs to the RnpA family. Consists of a catalytic RNA component (M1 or rnpB) and a protein subunit.

The enzyme catalyses Endonucleolytic cleavage of RNA, removing 5'-extranucleotides from tRNA precursor.. Functionally, RNaseP catalyzes the removal of the 5'-leader sequence from pre-tRNA to produce the mature 5'-terminus. It can also cleave other RNA substrates such as 4.5S RNA. The protein component plays an auxiliary but essential role in vivo by binding to the 5'-leader sequence and broadening the substrate specificity of the ribozyme. The chain is Ribonuclease P protein component from Mycoplasma mycoides subsp. mycoides SC (strain CCUG 32753 / NCTC 10114 / PG1).